The chain runs to 159 residues: Type IV major alpha-pilin (159 aa).

The propeptide at 1-6 (MNAQKG) is leader sequence. The residue at position 7 (F7) is an N-methylphenylalanine. The helical transmembrane segment at 7–27 (FTLIELMIVIAIIGILAAIAL) threads the bilayer. Residues 64 to 87 (VLSEESSTSKENIGLTSSETSTKP) form a disordered region. A compositionally biased stretch (polar residues) spans 67-87 (EESSTSKENIGLTSSETSTKP). Residues C137 and C156 are joined by a disulfide bond.

Belongs to the N-Me-Phe pilin family. In terms of assembly, major component of the type IV pilus (T4P) that plays a role in surface and attachment to the host epithelial tissues.

Its subcellular location is the fimbrium. The protein resides in the membrane. The chain is Type IV major alpha-pilin (tfpI) from Moraxella bovis.